Reading from the N-terminus, the 308-residue chain is Heme A synthase (308 aa).

Topologically, residues 1–8 are cytoplasmic; sequence MFKKRNLK. Residues 9–29 traverse the membrane as a helical segment; it reads WLSILATVIMAWVQLGGALVT. Topologically, residues 30–67 are extracellular; it reads KTGSENGCGASWPLCHGALLPQNLPIATIIELSHRATS. Cysteine 37 and cysteine 44 form a disulfide bridge. Glutamate 60 is an active-site residue. Residue histidine 63 participates in heme o binding. The helical transmembrane segment at 68–88 threads the bilayer; that stretch reads ALSLIVVLWLVITAWKNIGYI. Residues 89 to 93 are Cytoplasmic-facing; the sequence is KEVKP. The helical transmembrane segment at 94 to 114 threads the bilayer; that stretch reads LCIISVAFLLIQALVGAAAVL. Over 115–123 the chain is Extracellular; it reads WQQNDYVLA. A helical transmembrane segment spans residues 124 to 144; sequence LHFGISLISFSSVFVLTLIIF. Histidine 125 serves as a coordination point for heme o. The Cytoplasmic segment spans residues 145–161; the sequence is DVDQKYEANKVHIDRKL. A helical membrane pass occupies residues 162 to 182; it reads RIYTWTMAICLYVGIYTGALV. At 183–215 the chain is on the extracellular side; that stretch reads RHTKSSLAYGSWPLPFNDLIPHTEQDWVQLAHR. Histidine 214 contacts heme b. The chain crosses the membrane as a helical span at residues 216-236; that stretch reads TLALIASISVFLAFNYAIKHY. Residues 237–244 are Cytoplasmic-facing; sequence QNNRTIRY. Residues 245–265 form a helical membrane-spanning segment; it reads GYTAALLLIILQIVTGALSIF. Residues 266–270 lie on the Extracellular side of the membrane; it reads THVNL. The helical transmembrane segment at 271–291 threads the bilayer; it reads IIALLHALIITFEFGLIAYLI. Residue histidine 276 coordinates heme b. At 292–308 the chain is on the cytoplasmic side; that stretch reads VLLLRSQRVEKVKQNAY.

This sequence belongs to the COX15/CtaA family. Type 1 subfamily. In terms of assembly, interacts with CtaB. It depends on heme b as a cofactor.

It is found in the cell membrane. It carries out the reaction Fe(II)-heme o + 2 A + H2O = Fe(II)-heme a + 2 AH2. It participates in porphyrin-containing compound metabolism; heme A biosynthesis; heme A from heme O: step 1/1. In terms of biological role, catalyzes the conversion of heme O to heme A by two successive hydroxylations of the methyl group at C8. The first hydroxylation forms heme I, the second hydroxylation results in an unstable dihydroxymethyl group, which spontaneously dehydrates, resulting in the formyl group of heme A. In Staphylococcus carnosus (strain TM300), this protein is Heme A synthase.